Consider the following 637-residue polypeptide: Neurexin-3-beta (637 aa).

Positions 1 to 35 are cleaved as a signal peptide; the sequence is MHLRIHARRSPPRRPAWTLGIWFLFWGCIVSSVWS. At 36-562 the chain is on the extracellular side; the sequence is SSNVASSSST…EVIRESSSTT (527 aa). Over residues 43–52 the composition is skewed to low complexity; that stretch reads SSTSSSPGSH. The interval 43-65 is disordered; sequence SSTSSSPGSHSQHEHHFHGSKHH. Positions 55–65 are enriched in basic residues; it reads HEHHFHGSKHH. A Laminin G-like domain is found at 85–255; it reads ATYIFGKSGG…NPNIKINGSV (171 aa). Residues Asp137 and Ile154 each coordinate Ca(2+). Residue Asn184 is glycosylated (N-linked (GlcNAc...) asparagine). Positions 206 and 208 each coordinate Ca(2+). N-linked (GlcNAc...) asparagine glycans are attached at residues Asn252 and Asn296. The disordered stretch occupies residues 289–310; sequence ATTTTRKNRSTASIQPTSDDLV. Over residues 298–310 the composition is skewed to polar residues; that stretch reads STASIQPTSDDLV. A glycan (O-linked (Xyl...) (heparan sulfate) serine) is linked at Ser312. The chain crosses the membrane as a helical span at residues 563-583; it reads GMVVGIVAAAALCILILLYAM. The Cytoplasmic segment spans residues 584 to 637; that stretch reads YKYRNRDEGSYQVDETRNYISNSAQSNGTLMKEKQQSSKSGHKKQKNKDREYYV. Positions 605–637 are disordered; the sequence is NSAQSNGTLMKEKQQSSKSGHKKQKNKDREYYV.

Belongs to the neurexin family. As to quaternary structure, weakly interacts with CBLN1 and CBLN2. Very weak binding, if any, to CBLN4. Specific isoforms bind neuroligins NLGN1, NLGN2 and NLGN3. Interacts with CLSTN3. In terms of processing, processed by alpha-secretase leading to the formation of an extracellular soluble protein as well as a C-terminal membrane-embedded fragment (CTF). Proteolysis of these CTFs by gamma-secretase releases intracellular domains (ICDs) and extracellular peptides. Post-translationally, O-glycosylated; contains heparan sulfate. Heparan sulfate attachment is required for synapse development by mediating interactions with neuroligins. In terms of tissue distribution, expressed in the blood vessel walls (at protein level).

Its subcellular location is the presynaptic cell membrane. Its function is as follows. Neuronal cell surface protein that may be involved in cell recognition and cell adhesion. May mediate intracellular signaling. Functions as part of a trans-synaptic complex by binding to cerebellins and postsynaptic GRID1. This interaction helps regulate the activity of NMDA and AMPA receptors at hippocampal synapses without affecting synapse formation. NRXN3B-CBLN2-GRID1 complex transduce presynaptic signals into postsynaptic AMPAR response. This Homo sapiens (Human) protein is Neurexin-3-beta.